The following is a 420-amino-acid chain: Trophoblast glycoprotein (420 aa).

A signal peptide spans Met1–Ser34. Over Thr35–Ser355 the chain is Extracellular. The LRRNT domain occupies Ser53 to Leu91. 2 cysteine pairs are disulfide-bonded: Cys62–Cys68 and Cys66–Cys77. Asn81 carries an N-linked (GlcNAc...) asparagine glycan. LRR repeat units lie at residues Tyr92 to Arg113, Pro116 to Glu139, Leu141 to Ser163, Pro172 to Val204, Leu209 to Gln232, Leu233 to Arg255, and Asn256 to Asn275. N-linked (GlcNAc...) asparagine glycosylation is present at Asn124. Asn275 carries N-linked (GlcNAc...) asparagine glycosylation. In terms of domain architecture, LRRCT spans Gly283 to Pro346. Disulfide bonds link Cys298–Cys323 and Cys300–Cys344. A helical transmembrane segment spans residues Tyr356–Leu376. Residues Asn377–Val420 lie on the Cytoplasmic side of the membrane. A Phosphoserine modification is found at Ser418.

Highly glycosylated.

Its subcellular location is the cell membrane. Its function is as follows. May function as an inhibitor of Wnt/beta-catenin signaling by indirectly interacting with LRP6 and blocking Wnt3a-dependent LRP6 internalization. The protein is Trophoblast glycoprotein (TPBG) of Macaca fascicularis (Crab-eating macaque).